Consider the following 326-residue polypeptide: Pyruvate dehydrogenase E1 component subunit alpha (326 aa).

As to quaternary structure, heterodimer of an alpha and a beta chain. The cofactor is thiamine diphosphate.

It catalyses the reaction N(6)-[(R)-lipoyl]-L-lysyl-[protein] + pyruvate + H(+) = N(6)-[(R)-S(8)-acetyldihydrolipoyl]-L-lysyl-[protein] + CO2. In terms of biological role, the pyruvate dehydrogenase complex catalyzes the overall conversion of pyruvate to acetyl-CoA and CO(2). It contains multiple copies of three enzymatic components: pyruvate dehydrogenase (E1), dihydrolipoamide acetyltransferase (E2) and lipoamide dehydrogenase (E3). The polypeptide is Pyruvate dehydrogenase E1 component subunit alpha (pdhA) (Rickettsia bellii (strain RML369-C)).